A 300-amino-acid polypeptide reads, in one-letter code: Protein phosphatase 2C 1 (300 aa).

The PPM-type phosphatase domain maps to 23 to 298 (IFAASEMQGW…DNMTTILVYL (276 aa)). Residues Asp57, Gly58, Asp237, and Asp289 each coordinate Mn(2+).

The protein belongs to the PP2C family. Mg(2+) serves as cofactor. Mn(2+) is required as a cofactor. The N-terminus is blocked.

Its subcellular location is the membrane. It carries out the reaction O-phospho-L-seryl-[protein] + H2O = L-seryl-[protein] + phosphate. It catalyses the reaction O-phospho-L-threonyl-[protein] + H2O = L-threonyl-[protein] + phosphate. In terms of biological role, serine and threonine phosphatase. In Paramecium tetraurelia, this protein is Protein phosphatase 2C 1.